The following is a 120-amino-acid chain: Flagellar transcriptional regulator FlhD (120 aa).

The protein belongs to the FlhD family. In terms of assembly, homodimer; disulfide-linked. Forms a heterohexamer composed of two FlhC and four FlhD subunits. Each FlhC binds a FlhD dimer, forming a heterotrimer, and a hexamer assembles by dimerization of two heterotrimers.

Its subcellular location is the cytoplasm. Functionally, functions in complex with FlhC as a master transcriptional regulator that regulates transcription of several flagellar and non-flagellar operons by binding to their promoter region. Activates expression of class 2 flagellar genes, including fliA, which is a flagellum-specific sigma factor that turns on the class 3 genes. Also regulates genes whose products function in a variety of physiological pathways. This Erwinia tasmaniensis (strain DSM 17950 / CFBP 7177 / CIP 109463 / NCPPB 4357 / Et1/99) protein is Flagellar transcriptional regulator FlhD.